The chain runs to 165 residues: uncharacterized protein (165 aa).

The chain crosses the membrane as a helical span at residues 20–40 (INLIASIVLWLLFVITVIGTF). A glycan (N-linked (GlcNAc...) asparagine; by host) is linked at Asn-51. Residues 97–117 (VGIIVILIFMLMIIMNGFYQM) traverse the membrane as a helical segment.

It localises to the membrane. This is an uncharacterized protein from Acanthamoeba polyphaga (Amoeba).